The primary structure comprises 282 residues: Succinate dehydrogenase [ubiquinone] iron-sulfur subunit, mitochondrial (282 aa).

The transit peptide at 1–30 (MAATVGVSLKRGFPAAVLGRVGLQFQACRG) directs the protein to the mitochondrion. In terms of domain architecture, 2Fe-2S ferredoxin-type spans 42-135 (KKFAIYRWDP…VSKIYPLPHM (94 aa)). Lys-53 and Lys-57 each carry N6-acetyllysine. The [2Fe-2S] cluster site is built by Cys-95, Cys-100, Cys-103, and Cys-115. Residues 148–220 (FYAQYKSIEP…PAVLMQAYRW (73 aa)) form an interaction with SDHAF1 region. Residues 178 to 208 (DREKLDGLYECILCACCSTSCPSYWWNGDKY) enclose the 4Fe-4S ferredoxin-type domain. [4Fe-4S] cluster contacts are provided by Cys-188, Cys-191, and Cys-194. Position 198 (Cys-198) interacts with [3Fe-4S] cluster. Residue Trp-203 coordinates a ubiquinone. [3Fe-4S] cluster is bound by residues Cys-245 and Cys-251. Cys-255 contacts [4Fe-4S] cluster.

It belongs to the succinate dehydrogenase/fumarate reductase iron-sulfur protein family. As to quaternary structure, component of complex II composed of four subunits: the flavoprotein (FP) SDHA, iron-sulfur protein (IP) SDHB, and a cytochrome b560 composed of SDHC and SDHD. Interacts with SDHAF1; the interaction is required for iron-sulfur cluster incorporation into SDHB. [2Fe-2S] cluster serves as cofactor. The cofactor is [3Fe-4S] cluster. [4Fe-4S] cluster is required as a cofactor.

It is found in the mitochondrion inner membrane. The catalysed reaction is a quinone + succinate = fumarate + a quinol. It catalyses the reaction (R)-malate + a quinone = enol-oxaloacetate + a quinol. The enzyme catalyses (S)-malate + a quinone = enol-oxaloacetate + a quinol. It functions in the pathway carbohydrate metabolism; tricarboxylic acid cycle; fumarate from succinate (eukaryal route): step 1/1. Enol-oxaloacetate inhibits the succinate dehydrogenase activity. Its function is as follows. Iron-sulfur protein (IP) subunit of the succinate dehydrogenase complex (mitochondrial respiratory chain complex II), responsible for transferring electrons from succinate to ubiquinone (coenzyme Q). SDH also oxidizes malate to the non-canonical enol form of oxaloacetate, enol-oxaloacetate. Enol-oxaloacetate, which is a potent inhibitor of the succinate dehydrogenase activity, is further isomerized into keto-oxaloacetate. The protein is Succinate dehydrogenase [ubiquinone] iron-sulfur subunit, mitochondrial (Sdhb) of Mus musculus (Mouse).